The sequence spans 306 residues: Cilia- and flagella-associated protein 73 (306 aa).

Coiled-coil stretches lie at residues 49–139 and 197–231; these read LQAQ…QRLE and QSEK…WESK.

The protein belongs to the CFAP73 family.

The protein resides in the cytoplasm. It is found in the cytoskeleton. The protein localises to the cilium axoneme. In terms of biological role, may play a role in ciliary/flagellar motility by regulating the assembly and the activity of axonemal inner dynein arm. This is Cilia- and flagella-associated protein 73 from Mus musculus (Mouse).